The sequence spans 730 residues: Hepatocyte growth factor (730 aa).

The signal sequence occupies residues 1 to 31; that stretch reads MWVTKLLPLLVLQQLLLHLLLLPVAVPRAEG. Pyrrolidone carboxylic acid is present on glutamine 32. The PAN domain maps to 37-123; the sequence is NTLHEFKKSA…HEFDLYENKD (87 aa). 8 disulfides stabilise this stretch: cysteine 70/cysteine 96, cysteine 74/cysteine 84, cysteine 128/cysteine 206, cysteine 149/cysteine 189, cysteine 177/cysteine 201, cysteine 211/cysteine 288, cysteine 232/cysteine 271, and cysteine 260/cysteine 283. Kringle domains are found at residues 128–206 and 211–288; these read CIIG…IPQC and CMTC…IKMC. An N-linked (GlcNAc...) asparagine glycan is attached at asparagine 294. 11 disulfide bridges follow: cysteine 305-cysteine 383, cysteine 326-cysteine 365, cysteine 354-cysteine 377, cysteine 391-cysteine 469, cysteine 412-cysteine 452, cysteine 440-cysteine 464, cysteine 487-cysteine 606, cysteine 519-cysteine 535, cysteine 614-cysteine 681, cysteine 644-cysteine 660, and cysteine 671-cysteine 699. 2 consecutive Kringle domains span residues 305–383 and 391–469; these read CIQG…IPKC and CYRG…IFRC. Asparagine 402 is a glycosylation site (N-linked (GlcNAc...) asparagine). The Peptidase S1 domain maps to 495-723; it reads VVNGIPTRTN…YAKWIHKIIL (229 aa). Asparagine 568 and asparagine 655 each carry an N-linked (GlcNAc...) asparagine glycan.

It belongs to the peptidase S1 family. Plasminogen subfamily. Dimer of an alpha chain and a beta chain linked by a disulfide bond. Interacts with SRPX2; the interaction increases HGF mitogenic activity. In terms of processing, the single-chain precursor undergoes proteolytic processing by TMPRSS13 resulting in an active two-chain form. The single-chain precursor undergoes proteolytic processing by HGFAC resulting in an active two-chain form.

Potent mitogen for mature parenchymal hepatocyte cells, seems to be a hepatotrophic factor, and acts as a growth factor for a broad spectrum of tissues and cell types. Activating ligand for the receptor tyrosine kinase MET by binding to it and promoting its dimerization. Activates MAPK signaling following TMPRSS13 cleavage and activation. In Canis lupus familiaris (Dog), this protein is Hepatocyte growth factor (HGF).